Here is a 594-residue protein sequence, read N- to C-terminus: Potassium-transporting ATPase potassium-binding subunit (594 aa).

The next 12 membrane-spanning stretches (helical) occupy residues 4–24 (QFFG…PFLG), 65–85 (QYAV…YALQ), 136–156 (ALTV…FALI), 179–199 (LYVL…QGVI), 287–307 (LEML…GEMV), 314–334 (VAIL…TQNA), 361–381 (FGVA…CGAV), 390–410 (AMGG…FGGV), 413–433 (GLYG…LMIG), 450–470 (MVSI…ALAV), 518–538 (LLGL…LALA), and 560–580 (LFIV…YVPA).

This sequence belongs to the KdpA family. In terms of assembly, the system is composed of three essential subunits: KdpA, KdpB and KdpC.

The protein resides in the cell inner membrane. Functionally, part of the high-affinity ATP-driven potassium transport (or Kdp) system, which catalyzes the hydrolysis of ATP coupled with the electrogenic transport of potassium into the cytoplasm. This subunit binds the periplasmic potassium ions and delivers the ions to the membrane domain of KdpB through an intramembrane tunnel. This Bordetella avium (strain 197N) protein is Potassium-transporting ATPase potassium-binding subunit.